The chain runs to 942 residues: Serine/threonine-protein kinase ATG1 (942 aa).

Positions 11-312 constitute a Protein kinase domain; it reads YVVEKEIGKG…FEEFFNNKIV (302 aa). Residues 17–25 and lysine 41 contribute to the ATP site; that span reads IGKGSFATV. Aspartate 159 acts as the Proton acceptor in catalysis. Polar residues predominate over residues 435–452; it reads NSSRVNKLDKSNLSGKSD. Disordered regions lie at residues 435–454, 505–529, and 817–836; these read NSSR…SDSS, QPHN…SRRA, and NSKP…NDSN. A compositionally biased stretch (low complexity) spans 515–529; sequence RAPSTTSGGTSSRRA. Over residues 819–834 the composition is skewed to polar residues; sequence KPGTHNQSPKSKISND.

This sequence belongs to the protein kinase superfamily. Ser/Thr protein kinase family. APG1/unc-51/ULK1 subfamily. In terms of assembly, homodimer. Forms a ternary complex with ATG13 and ATG17.

The protein resides in the cytoplasm. It localises to the preautophagosomal structure membrane. It carries out the reaction L-seryl-[protein] + ATP = O-phospho-L-seryl-[protein] + ADP + H(+). The catalysed reaction is L-threonyl-[protein] + ATP = O-phospho-L-threonyl-[protein] + ADP + H(+). Functionally, serine/threonine protein kinase involved in the cytoplasm to vacuole transport (Cvt) and found to be essential in autophagy, where it is required for the formation of autophagosomes. Involved in the clearance of protein aggregates which cannot be efficiently cleared by the proteasome. Required for selective autophagic degradation of the nucleus (nucleophagy) as well as for mitophagy which contributes to regulate mitochondrial quantity and quality by eliminating the mitochondria to a basal level to fulfill cellular energy requirements and preventing excess ROS production. Also involved in endoplasmic reticulum-specific autophagic process, in selective removal of ER-associated degradation (ERAD) substrates. Plays a key role in ATG9 and ATG23 cycling through the pre-autophagosomal structure and is necessary to promote ATG18 binding to ATG9 through phosphorylation of ATG9. Catalyzes phosphorylation of ATG4, decreasing the interaction between ATG4 and ATG8 and impairing deconjugation of PE-conjugated forms of ATG8. Contributes to virulence by conferring resistance to unstable nutrient environments and immune defense of hosts. The polypeptide is Serine/threonine-protein kinase ATG1 (Candida glabrata (strain ATCC 2001 / BCRC 20586 / JCM 3761 / NBRC 0622 / NRRL Y-65 / CBS 138) (Yeast)).